Consider the following 664-residue polypeptide: Type IV inositol polyphosphate 5-phosphatase 3 (664 aa).

The segment at 35–76 (GRDPEYGADTDNESENEDAREDNDDSSSDEEGGSGSRGRESK) is disordered. Positions 40–66 (YGADTDNESENEDAREDNDDSSSDEEG) are enriched in acidic residues. Catalytic regions lie at residues 514-529 (ERIIWLGDLNYRLSSS) and 592-607 (PKRTPAWCDRVLSYGK).

The protein belongs to the inositol polyphosphate 5-phosphatase family.

It catalyses the reaction a 1,2-diacyl-sn-glycero-3-phospho-(1D-myo-inositol-4,5-bisphosphate) + H2O = a 1,2-diacyl-sn-glycero-3-phospho-(1D-myo-inositol 4-phosphate) + phosphate. The enzyme catalyses a 1,2-diacyl-sn-glycero-3-phospho-(1D-myo-inositol-3,4,5-trisphosphate) + H2O = a 1,2-diacyl-sn-glycero-3-phospho-(1D-myo-inositol-3,4-bisphosphate) + phosphate. Has phosphatase activity toward PtdIns(4,5)P2 and PtdIns(3,4,5)P3. In Arabidopsis thaliana (Mouse-ear cress), this protein is Type IV inositol polyphosphate 5-phosphatase 3.